The following is a 209-amino-acid chain: Large ribosomal subunit protein bL25 (209 aa).

The segment at 190-209 is disordered; it reads PDASAAPVAAPAAPAKKGKK.

The protein belongs to the bacterial ribosomal protein bL25 family. CTC subfamily. As to quaternary structure, part of the 50S ribosomal subunit; part of the 5S rRNA/L5/L18/L25 subcomplex. Contacts the 5S rRNA. Binds to the 5S rRNA independently of L5 and L18.

Its function is as follows. This is one of the proteins that binds to the 5S RNA in the ribosome where it forms part of the central protuberance. This Delftia acidovorans (strain DSM 14801 / SPH-1) protein is Large ribosomal subunit protein bL25.